The chain runs to 259 residues: Uridylate kinase (259 aa).

21–24 (KLSG) provides a ligand contact to ATP. A UMP-binding site is contributed by glycine 63. Positions 64 and 68 each coordinate ATP. Residues aspartate 83 and 144–151 (TGNPYFTT) each bind UMP. Residues threonine 171, phenylalanine 177, and aspartate 180 each contribute to the ATP site.

The protein belongs to the UMP kinase family. As to quaternary structure, homohexamer.

The protein localises to the cytoplasm. The enzyme catalyses UMP + ATP = UDP + ADP. It functions in the pathway pyrimidine metabolism; CTP biosynthesis via de novo pathway; UDP from UMP (UMPK route): step 1/1. Its activity is regulated as follows. Inhibited by UTP. Functionally, catalyzes the reversible phosphorylation of UMP to UDP. The sequence is that of Uridylate kinase from Salinibacter ruber (strain DSM 13855 / M31).